A 1441-amino-acid polypeptide reads, in one-letter code: Probable cleavage and polyadenylation specificity factor subunit 1 (1441 aa).

Belongs to the CPSF1 family. As to quaternary structure, CPSF is a heterotetramer composed of four distinct subunits 160, 100, 70 and 30 kDa.

It is found in the nucleus. In terms of biological role, CPSF plays a key role in pre-mRNA 3'-end formation, recognizing the AAUAAA signal sequence and interacting with poly(A)polymerase and other factors to bring about cleavage and poly(A) addition. This subunit is involved in the RNA recognition step of the polyadenylation reaction. The protein is Probable cleavage and polyadenylation specificity factor subunit 1 of Oryza sativa subsp. japonica (Rice).